Here is a 264-residue protein sequence, read N- to C-terminus: PDZ domain-containing protein 9 (264 aa).

The PDZ domain occupies 22–109 (VHNLSKTQQT…GTVLQIKVYR (88 aa)).

This is PDZ domain-containing protein 9 (PDZD9) from Macaca fascicularis (Crab-eating macaque).